Consider the following 230-residue polypeptide: Orotidine 5'-phosphate decarboxylase (230 aa).

Residues Asp-10, Lys-32, 59-68 (DLKYHDIPNT), Thr-119, Arg-180, Gln-189, Gly-209, and Arg-210 contribute to the substrate site. Lys-61 functions as the Proton donor in the catalytic mechanism.

Belongs to the OMP decarboxylase family. Type 1 subfamily. Homodimer.

It catalyses the reaction orotidine 5'-phosphate + H(+) = UMP + CO2. It functions in the pathway pyrimidine metabolism; UMP biosynthesis via de novo pathway; UMP from orotate: step 2/2. Functionally, catalyzes the decarboxylation of orotidine 5'-monophosphate (OMP) to uridine 5'-monophosphate (UMP). This chain is Orotidine 5'-phosphate decarboxylase, found in Haemophilus influenzae (strain PittEE).